We begin with the raw amino-acid sequence, 118 residues long: Large ribosomal subunit protein bL20 (118 aa).

This sequence belongs to the bacterial ribosomal protein bL20 family.

Its function is as follows. Binds directly to 23S ribosomal RNA and is necessary for the in vitro assembly process of the 50S ribosomal subunit. It is not involved in the protein synthesizing functions of that subunit. The chain is Large ribosomal subunit protein bL20 from Oceanobacillus iheyensis (strain DSM 14371 / CIP 107618 / JCM 11309 / KCTC 3954 / HTE831).